The chain runs to 141 residues: Large-conductance mechanosensitive channel (141 aa).

3 consecutive transmembrane segments (helical) span residues 16–36, 40–60, and 86–106; these read VIDLAVGVIIGAAFGKIVDSV, LIMPLVGRVIGKLDFSSMFIV, and GNFLTIVVNFLILAFIIFLMV.

Belongs to the MscL family. In terms of assembly, homopentamer.

The protein resides in the cell inner membrane. Its function is as follows. Channel that opens in response to stretch forces in the membrane lipid bilayer. May participate in the regulation of osmotic pressure changes within the cell. This is Large-conductance mechanosensitive channel from Cupriavidus necator (strain ATCC 17699 / DSM 428 / KCTC 22496 / NCIMB 10442 / H16 / Stanier 337) (Ralstonia eutropha).